Here is a 346-residue protein sequence, read N- to C-terminus: Uroporphyrinogen decarboxylase (346 aa).

Substrate contacts are provided by residues 21–25, Phe40, Asp71, Tyr146, Ser201, and His316; that span reads RQAGR.

The protein belongs to the uroporphyrinogen decarboxylase family. Homodimer.

It localises to the cytoplasm. The catalysed reaction is uroporphyrinogen III + 4 H(+) = coproporphyrinogen III + 4 CO2. It functions in the pathway porphyrin-containing compound metabolism; protoporphyrin-IX biosynthesis; coproporphyrinogen-III from 5-aminolevulinate: step 4/4. Functionally, catalyzes the decarboxylation of four acetate groups of uroporphyrinogen-III to yield coproporphyrinogen-III. In Rickettsia felis (strain ATCC VR-1525 / URRWXCal2) (Rickettsia azadi), this protein is Uroporphyrinogen decarboxylase.